The following is a 586-amino-acid chain: Asparagine synthetase [glutamine-hydrolyzing] 1 (586 aa).

Cysteine 2 serves as the catalytic For GATase activity. A Glutamine amidotransferase type-2 domain is found at 2 to 185 (CGILAVLGCS…PGHLYSSRER (184 aa)). L-glutamine contacts are provided by residues 50 to 54 (RLAIV), 75 to 77 (NGE), and aspartate 98. An Asparagine synthetase domain is found at 193–516 (PTWFSESIPS…PQNSARLTVP (324 aa)). Residues leucine 231, valine 267, and 341–342 (SG) each bind ATP.

It carries out the reaction L-aspartate + L-glutamine + ATP + H2O = L-asparagine + L-glutamate + AMP + diphosphate + H(+). The protein operates within amino-acid biosynthesis; L-asparagine biosynthesis; L-asparagine from L-aspartate (L-Gln route): step 1/1. This chain is Asparagine synthetase [glutamine-hydrolyzing] 1 (AS1), found in Lotus japonicus (Lotus corniculatus var. japonicus).